A 938-amino-acid chain; its full sequence is Isoleucine--tRNA ligase (938 aa).

The 'HIGH' region signature appears at 58-68; it reads PYANGSIHIGH. The residue at position 183 (K183) is an N6-acetyllysine. E561 contacts L-isoleucyl-5'-AMP. Residues 602–606 carry the 'KMSKS' region motif; that stretch reads KMSKS. K605 is a binding site for ATP. C901, C904, C921, and C924 together coordinate Zn(2+).

Belongs to the class-I aminoacyl-tRNA synthetase family. IleS type 1 subfamily. Monomer. The cofactor is Zn(2+).

Its subcellular location is the cytoplasm. It catalyses the reaction tRNA(Ile) + L-isoleucine + ATP = L-isoleucyl-tRNA(Ile) + AMP + diphosphate. In terms of biological role, catalyzes the attachment of isoleucine to tRNA(Ile). As IleRS can inadvertently accommodate and process structurally similar amino acids such as valine, to avoid such errors it has two additional distinct tRNA(Ile)-dependent editing activities. One activity is designated as 'pretransfer' editing and involves the hydrolysis of activated Val-AMP. The other activity is designated 'posttransfer' editing and involves deacylation of mischarged Val-tRNA(Ile). This is Isoleucine--tRNA ligase from Shigella dysenteriae serotype 1 (strain Sd197).